The following is a 163-amino-acid chain: NADH-quinone oxidoreductase subunit I (163 aa).

2 4Fe-4S ferredoxin-type domains span residues leucine 54 to glutamate 84 and threonine 94 to isoleucine 123. Positions 64, 67, 70, 74, 103, 106, 109, and 113 each coordinate [4Fe-4S] cluster.

It belongs to the complex I 23 kDa subunit family. As to quaternary structure, NDH-1 is composed of 14 different subunits. Subunits NuoA, H, J, K, L, M, N constitute the membrane sector of the complex. [4Fe-4S] cluster is required as a cofactor.

Its subcellular location is the cell inner membrane. The enzyme catalyses a quinone + NADH + 5 H(+)(in) = a quinol + NAD(+) + 4 H(+)(out). In terms of biological role, NDH-1 shuttles electrons from NADH, via FMN and iron-sulfur (Fe-S) centers, to quinones in the respiratory chain. The immediate electron acceptor for the enzyme in this species is believed to be ubiquinone. Couples the redox reaction to proton translocation (for every two electrons transferred, four hydrogen ions are translocated across the cytoplasmic membrane), and thus conserves the redox energy in a proton gradient. This chain is NADH-quinone oxidoreductase subunit I, found in Methylobacillus flagellatus (strain ATCC 51484 / DSM 6875 / VKM B-1610 / KT).